The chain runs to 101 residues: MAKLALIEREKKRARLAAKFAPKRAELKAIIDDQSKSEEERYSARLELQQLPRNSNPTRKRNRCAITGRPRGTFRKFGLARNKIREIAFRGEIPGLTKASW.

This sequence belongs to the universal ribosomal protein uS14 family. As to quaternary structure, part of the 30S ribosomal subunit. Contacts proteins S3 and S10.

In terms of biological role, binds 16S rRNA, required for the assembly of 30S particles and may also be responsible for determining the conformation of the 16S rRNA at the A site. The polypeptide is Small ribosomal subunit protein uS14 (Paraburkholderia phymatum (strain DSM 17167 / CIP 108236 / LMG 21445 / STM815) (Burkholderia phymatum)).